Here is a 369-residue protein sequence, read N- to C-terminus: 4-hydroxy-3-methylbut-2-en-1-yl diphosphate synthase (flavodoxin) (369 aa).

Positions 270, 273, 305, and 312 each coordinate [4Fe-4S] cluster.

This sequence belongs to the IspG family. It depends on [4Fe-4S] cluster as a cofactor.

The enzyme catalyses (2E)-4-hydroxy-3-methylbut-2-enyl diphosphate + oxidized [flavodoxin] + H2O + 2 H(+) = 2-C-methyl-D-erythritol 2,4-cyclic diphosphate + reduced [flavodoxin]. The protein operates within isoprenoid biosynthesis; isopentenyl diphosphate biosynthesis via DXP pathway; isopentenyl diphosphate from 1-deoxy-D-xylulose 5-phosphate: step 5/6. Functionally, converts 2C-methyl-D-erythritol 2,4-cyclodiphosphate (ME-2,4cPP) into 1-hydroxy-2-methyl-2-(E)-butenyl 4-diphosphate. In Pseudomonas syringae pv. tomato (strain ATCC BAA-871 / DC3000), this protein is 4-hydroxy-3-methylbut-2-en-1-yl diphosphate synthase (flavodoxin).